A 507-amino-acid polypeptide reads, in one-letter code: Histidine ammonia-lyase (507 aa).

A cross-link (5-imidazolinone (Ala-Gly)) is located at residues 141–143; sequence ASG. Position 142 is a 2,3-didehydroalanine (Ser) (Ser142).

The protein belongs to the PAL/histidase family. Contains an active site 4-methylidene-imidazol-5-one (MIO), which is formed autocatalytically by cyclization and dehydration of residues Ala-Ser-Gly.

The protein localises to the cytoplasm. It catalyses the reaction L-histidine = trans-urocanate + NH4(+). It functions in the pathway amino-acid degradation; L-histidine degradation into L-glutamate; N-formimidoyl-L-glutamate from L-histidine: step 1/3. This chain is Histidine ammonia-lyase, found in Burkholderia vietnamiensis (strain G4 / LMG 22486) (Burkholderia cepacia (strain R1808)).